A 482-amino-acid polypeptide reads, in one-letter code: ATP synthase subunit beta (482 aa).

162–169 (GGAGVGKT) lines the ATP pocket.

The protein belongs to the ATPase alpha/beta chains family. In terms of assembly, F-type ATPases have 2 components, CF(1) - the catalytic core - and CF(0) - the membrane proton channel. CF(1) has five subunits: alpha(3), beta(3), gamma(1), delta(1), epsilon(1). CF(0) has four main subunits: a(1), b(1), b'(1) and c(9-12).

The protein localises to the cellular thylakoid membrane. It catalyses the reaction ATP + H2O + 4 H(+)(in) = ADP + phosphate + 5 H(+)(out). Produces ATP from ADP in the presence of a proton gradient across the membrane. The catalytic sites are hosted primarily by the beta subunits. This chain is ATP synthase subunit beta, found in Trichormus variabilis (strain ATCC 29413 / PCC 7937) (Anabaena variabilis).